Reading from the N-terminus, the 290-residue chain is Elongation factor Ts (290 aa).

The segment at 79–82 (TDFV) is involved in Mg(2+) ion dislocation from EF-Tu.

It belongs to the EF-Ts family.

It localises to the cytoplasm. Its function is as follows. Associates with the EF-Tu.GDP complex and induces the exchange of GDP to GTP. It remains bound to the aminoacyl-tRNA.EF-Tu.GTP complex up to the GTP hydrolysis stage on the ribosome. The sequence is that of Elongation factor Ts from Pseudoalteromonas atlantica (strain T6c / ATCC BAA-1087).